Reading from the N-terminus, the 500-residue chain is Na(+)/H(+) antiporter NhaB (500 aa).

Transmembrane regions (helical) follow at residues 28 to 50 (FLLLNPLLLWLAGPVTSAWVLVG), 68 to 88 (GGLLVLEALLLGLATPEALYA), 98 to 118 (LLLMFMVAGIYFMKDLLLLLF), 121 to 141 (LLLGVRSKTLLSLLFCLLAAL), 145 to 165 (FLDALTVTAVVISVAVAFFAV), 205 to 225 (LLMHAAVGTALGGVCTLVGEP), 244 to 264 (QVAPVSMPVLAAGLLTCVLLE), 311 to 331 (VLIVGLALHVAEVGLIGLLVI), 350 to 370 (FQEALPFTALLVVFFAVVAVI), 394 to 414 (MLFIANGLLSAISDNVFVATI), 449 to 469 (VATPNGQAAFLFLLTSSIAPL), and 477 to 497 (MVWMALPYTLVMGGLGWWAVS).

The protein belongs to the NhaB Na(+)/H(+) (TC 2.A.34) antiporter family.

Its subcellular location is the cell inner membrane. The enzyme catalyses 2 Na(+)(in) + 3 H(+)(out) = 2 Na(+)(out) + 3 H(+)(in). In terms of biological role, na(+)/H(+) antiporter that extrudes sodium in exchange for external protons. The protein is Na(+)/H(+) antiporter NhaB of Pseudomonas aeruginosa (strain LESB58).